The primary structure comprises 879 residues: Alanine--tRNA ligase (879 aa).

Positions 566, 570, 668, and 672 each coordinate Zn(2+).

Belongs to the class-II aminoacyl-tRNA synthetase family. The cofactor is Zn(2+).

Its subcellular location is the cytoplasm. The enzyme catalyses tRNA(Ala) + L-alanine + ATP = L-alanyl-tRNA(Ala) + AMP + diphosphate. Functionally, catalyzes the attachment of alanine to tRNA(Ala) in a two-step reaction: alanine is first activated by ATP to form Ala-AMP and then transferred to the acceptor end of tRNA(Ala). Also edits incorrectly charged Ser-tRNA(Ala) and Gly-tRNA(Ala) via its editing domain. In Clostridium botulinum (strain Loch Maree / Type A3), this protein is Alanine--tRNA ligase.